The following is a 585-amino-acid chain: Pre-mRNA-splicing factor sap145 (585 aa).

Residues 1–74 adopt a coiled-coil conformation; sequence MAEIQTAQNP…NNDNLYNDKK (74 aa). Residues 1–84 are disordered; it reads MAEIQTAQNP…SNGNFYDTNK (84 aa). Over residues 12-22 the composition is skewed to basic and acidic residues; that stretch reads KELEKILERNN. Basic residues predominate over residues 23-41; that stretch reads KQKNKKSRNQVRREKKKLL. The span at 51–62 shows a compositional bias: basic and acidic residues; the sequence is LAEKNSDDKDQL. S145 is modified (phosphoserine). The tract at residues 400–460 is disordered; it reads IHAGTGSPVS…SASEPRSQRE (61 aa). The span at 416-439 shows a compositional bias: acidic residues; sequence LEEFEEEESSEEEESEDVEYPTEE.

Belongs to the 40S cdc5-associated complex (or cwf complex), a spliceosome sub-complex reminiscent of a late-stage spliceosome composed of the U2, U5 and U6 snRNAs and at least brr2, cdc5, cwf2/prp3, cwf3/syf1, cwf4/syf3, cwf5/ecm2, spp42/cwf6, cwf7/spf27, cwf8, cwf9, cwf10, cwf11, cwf12, prp45/cwf13, cwf14, cwf15, cwf16, cwf17, cwf18, cwf19, cwf20, cwf21, cwf22, cwf23, cwf24, cwf25, cwf26, cyp7/cwf27, cwf28, cwf29/ist3, lea1, msl1, prp5/cwf1, prp10/sap155, prp12/sap130, prp17, prp22, sap61, sap62, sap114, sap145, slu7, smb1, smd1, smd3, smf1, smg1 and syf2. Sap145 is part of the SF3b subcomplex of the Prp19-associated nineteen complex (NTC), composed of ini1, prp10, prp12/sap130, sap10/sap155, sap14, sap49 and sap145. Part of the U2 snRNP.

It localises to the nucleus. It is found in the cytoplasm. Its function is as follows. Involved in pre-mRNA splicing. May be involved in endoplasmic reticulum-associated protein degradation (ERAD) and required for growth at low and high temperatures. The protein is Pre-mRNA-splicing factor sap145 (sap145) of Schizosaccharomyces pombe (strain 972 / ATCC 24843) (Fission yeast).